A 123-amino-acid chain; its full sequence is MATINQLVRQPRKRIVEKSDVPALQNCPQRRGVCTRVYTTTPKKPNSALRKVCRVRLTNGFEVSSYIGGEGHNLQEHSVVLIRGGRVKDLPGVRYHTVRGSLDTSGVKGRNQGRSKYGTKKPK.

The residue at position 89 (aspartate 89) is a 3-methylthioaspartic acid. The segment at 100–123 is disordered; it reads GSLDTSGVKGRNQGRSKYGTKKPK. Residues 111 to 123 show a composition bias toward basic residues; sequence NQGRSKYGTKKPK.

Belongs to the universal ribosomal protein uS12 family. In terms of assembly, part of the 30S ribosomal subunit. Contacts proteins S8 and S17. May interact with IF1 in the 30S initiation complex.

With S4 and S5 plays an important role in translational accuracy. Functionally, interacts with and stabilizes bases of the 16S rRNA that are involved in tRNA selection in the A site and with the mRNA backbone. Located at the interface of the 30S and 50S subunits, it traverses the body of the 30S subunit contacting proteins on the other side and probably holding the rRNA structure together. The combined cluster of proteins S8, S12 and S17 appears to hold together the shoulder and platform of the 30S subunit. The protein is Small ribosomal subunit protein uS12 of Pseudomonas syringae pv. syringae (strain B728a).